The primary structure comprises 435 residues: Metacaspase-1A (435 aa).

2 disordered regions span residues 1 to 46 (MQNH…APPP) and 106 to 129 (YQNP…VAFG). Residues 36–46 (SPQPGYGAPPP) show a composition bias toward pro residues. Active-site residues include His231 and Cys287.

It belongs to the peptidase C14B family.

Involved in cell death (apoptosis). The sequence is that of Metacaspase-1A (casA) from Neosartorya fischeri (strain ATCC 1020 / DSM 3700 / CBS 544.65 / FGSC A1164 / JCM 1740 / NRRL 181 / WB 181) (Aspergillus fischerianus).